A 514-amino-acid chain; its full sequence is MDTMRSLRFISAEALVSHPQVARQSLDSVAHNLYPLLFKASYLLEQAEVTRAVLGRWPLEEFRLGALLGPGADHPQDLRDRTCRACLEALVRGLADHVLQDRSRRRLRVADLTGIRDVQVQRCPCGRALGRWGRTQLLARTCCELQAEPLAAGRPVEVLADLFVTEGNFEAVVQALRPAGPAPLRVHCPSFRADSLSPSQLLHVLRLAGPGALRKLEVVHNVRLHAGHVQQLLAQVGFPRLASLTLPTKAFDAPPTYASTPDGEDPLLASIARELSKMAQLTELSVAFSTLTGKIPTLLGPLQTPLRVLDLANCALNHTDMAFLADCAHAAHLEVLDLSGHNLVSLYPSTFFRLLSQASRTLRILTLEECGIVDSHVGMLILGLSPCHRLRQLKFLGNPLSARALRRLFTALCELPELRCIEFPVPKDCYPEGAAYPQDELAMSKFNQQKYDEIAEELRAVLLRADREDIQVSTPLFGSFDPDIQETSNELGAFLLQAFKTALENFSRALKQIE.

An LRR 1; degenerate repeat occupies 104-141; that stretch reads RRRLRVADLTGIRDVQVQRCPCGRALGRWGRTQLLART. One copy of the LRR 2; degenerate repeat lies at 185–209; that stretch reads RVHCPSFRADSLSPSQLLHVLRLAG. The stretch at 238–277 is one LRR 4; degenerate repeat; that stretch reads FPRLASLTLPTKAFDAPPTYASTPDGEDPLLASIARELSK. LRR repeat units lie at residues 278–302, 303–334, 335–350, 359–386, and 387–411; these read MAQLTELSVAFSTLTGKIPTLLGPL, QTPLRVLDLANCALNHTDMAFLADCAHAAHLE, VLDLSGHNLVSLYPST, SRTLRILTLEECGIVDSHVGMLILGLSP, and CHRLRQLKFLGNPLSARALRRLFTA.

Belongs to the PRAME family. LRRC14 subfamily.

In Homo sapiens (Human), this protein is Leucine-rich repeat-containing protein 14B.